A 479-amino-acid polypeptide reads, in one-letter code: Probable phosphatidate cytidylyltransferase (479 aa).

Positions Met1–Glu28 are enriched in basic and acidic residues. Residues Met1–Lys71 are disordered. Residues Met1–Phe108 are Cytoplasmic-facing. Over residues Asn53–Asn69 the composition is skewed to low complexity. The helical transmembrane segment at Met109–Ile129 threads the bilayer. The Extracellular portion of the chain corresponds to Ala130 to Asn159. Residues Trp160–Ala180 form a helical membrane-spanning segment. Topologically, residues Asn181–Arg192 are cytoplasmic. A helical membrane pass occupies residues Tyr193–Leu213. The Extracellular portion of the chain corresponds to Arg214–Asn240. A helical membrane pass occupies residues Phe241–Val261. The Cytoplasmic segment spans residues Cys262–Glu293. The helical transmembrane segment at Gly294–Leu314 threads the bilayer. The Extracellular portion of the chain corresponds to Lys315–Ala375. A helical transmembrane segment spans residues Leu376 to Ile396. At Lys397–Ala479 the chain is on the cytoplasmic side.

It belongs to the CDS family.

Its subcellular location is the membrane. It catalyses the reaction a 1,2-diacyl-sn-glycero-3-phosphate + CTP + H(+) = a CDP-1,2-diacyl-sn-glycerol + diphosphate. Its pathway is phospholipid metabolism; CDP-diacylglycerol biosynthesis; CDP-diacylglycerol from sn-glycerol 3-phosphate: step 3/3. This chain is Probable phosphatidate cytidylyltransferase (cdsA), found in Dictyostelium discoideum (Social amoeba).